A 240-amino-acid polypeptide reads, in one-letter code: T4 protein (240 aa).

The protein belongs to the poxviruses B9 family.

This Sheeppox virus (strain KS-1) (SPPV) protein is T4 protein.